A 338-amino-acid polypeptide reads, in one-letter code: Aspartate carbamoyltransferase catalytic subunit (338 aa).

Carbamoyl phosphate is bound by residues Arg-72 and Thr-73. Lys-100 lines the L-aspartate pocket. Carbamoyl phosphate-binding residues include Arg-122, His-152, and Gln-155. L-aspartate-binding residues include Arg-186 and Arg-243. Positions 284 and 285 each coordinate carbamoyl phosphate.

It belongs to the aspartate/ornithine carbamoyltransferase superfamily. ATCase family. In terms of assembly, heterododecamer (2C3:3R2) of six catalytic PyrB chains organized as two trimers (C3), and six regulatory PyrI chains organized as three dimers (R2).

The catalysed reaction is carbamoyl phosphate + L-aspartate = N-carbamoyl-L-aspartate + phosphate + H(+). The protein operates within pyrimidine metabolism; UMP biosynthesis via de novo pathway; (S)-dihydroorotate from bicarbonate: step 2/3. Functionally, catalyzes the condensation of carbamoyl phosphate and aspartate to form carbamoyl aspartate and inorganic phosphate, the committed step in the de novo pyrimidine nucleotide biosynthesis pathway. This is Aspartate carbamoyltransferase catalytic subunit from Acinetobacter baumannii (strain AB307-0294).